Here is a 327-residue protein sequence, read N- to C-terminus: DNA-directed RNA polymerase subunit alpha (327 aa).

The alpha N-terminal domain (alpha-NTD) stretch occupies residues Met1–Gln233. The tract at residues Val247–Pro327 is alpha C-terminal domain (alpha-CTD).

This sequence belongs to the RNA polymerase alpha chain family. As to quaternary structure, homodimer. The RNAP catalytic core consists of 2 alpha, 1 beta, 1 beta' and 1 omega subunit. When a sigma factor is associated with the core the holoenzyme is formed, which can initiate transcription.

The enzyme catalyses RNA(n) + a ribonucleoside 5'-triphosphate = RNA(n+1) + diphosphate. Functionally, DNA-dependent RNA polymerase catalyzes the transcription of DNA into RNA using the four ribonucleoside triphosphates as substrates. The polypeptide is DNA-directed RNA polymerase subunit alpha (Laribacter hongkongensis (strain HLHK9)).